Here is a 192-residue protein sequence, read N- to C-terminus: Ion-translocating oxidoreductase complex subunit A (192 aa).

The next 6 membrane-spanning stretches (helical) occupy residues 5–25 (ALIL…FLGL), 39–59 (TGMG…SYLV), 65–85 (APLG…AAVV), 102–122 (VLGI…VALL), 134–154 (ALYG…FASI), and 171–191 (AIAL…IGLV).

This sequence belongs to the NqrDE/RnfAE family. The complex is composed of six subunits: RnfA, RnfB, RnfC, RnfD, RnfE and RnfG.

It localises to the cell inner membrane. Part of a membrane-bound complex that couples electron transfer with translocation of ions across the membrane. This Thioalkalivibrio sulfidiphilus (strain HL-EbGR7) protein is Ion-translocating oxidoreductase complex subunit A.